The primary structure comprises 122 residues: Large ribosomal subunit protein uL14 (122 aa).

The protein belongs to the universal ribosomal protein uL14 family. Part of the 50S ribosomal subunit. Forms a cluster with proteins L3 and L19. In the 70S ribosome, L14 and L19 interact and together make contacts with the 16S rRNA in bridges B5 and B8.

Binds to 23S rRNA. Forms part of two intersubunit bridges in the 70S ribosome. In Rhizobium johnstonii (strain DSM 114642 / LMG 32736 / 3841) (Rhizobium leguminosarum bv. viciae), this protein is Large ribosomal subunit protein uL14.